Consider the following 243-residue polypeptide: Adenosylcobinamide-GDP ribazoletransferase (243 aa).

A run of 6 helical transmembrane segments spans residues 33–53 (FLPV…LLAP), 59–79 (IIIV…HIDG), 105–125 (IGAF…TLAY), 127–147 (TENM…VFAA), 172–192 (VISI…GAII), and 223–243 (TIEI…SIII).

Belongs to the CobS family. Requires Mg(2+) as cofactor.

Its subcellular location is the cell membrane. The enzyme catalyses alpha-ribazole + adenosylcob(III)inamide-GDP = adenosylcob(III)alamin + GMP + H(+). It catalyses the reaction alpha-ribazole 5'-phosphate + adenosylcob(III)inamide-GDP = adenosylcob(III)alamin 5'-phosphate + GMP + H(+). Its pathway is cofactor biosynthesis; adenosylcobalamin biosynthesis; adenosylcobalamin from cob(II)yrinate a,c-diamide: step 7/7. Functionally, joins adenosylcobinamide-GDP and alpha-ribazole to generate adenosylcobalamin (Ado-cobalamin). Also synthesizes adenosylcobalamin 5'-phosphate from adenosylcobinamide-GDP and alpha-ribazole 5'-phosphate. The sequence is that of Adenosylcobinamide-GDP ribazoletransferase from Alkaliphilus oremlandii (strain OhILAs) (Clostridium oremlandii (strain OhILAs)).